The following is a 289-amino-acid chain: ATP synthase gamma chain (289 aa).

It belongs to the ATPase gamma chain family. In terms of assembly, F-type ATPases have 2 components, CF(1) - the catalytic core - and CF(0) - the membrane proton channel. CF(1) has five subunits: alpha(3), beta(3), gamma(1), delta(1), epsilon(1). CF(0) has three main subunits: a, b and c.

It localises to the cell inner membrane. In terms of biological role, produces ATP from ADP in the presence of a proton gradient across the membrane. The gamma chain is believed to be important in regulating ATPase activity and the flow of protons through the CF(0) complex. The sequence is that of ATP synthase gamma chain from Cereibacter sphaeroides (strain ATCC 17025 / ATH 2.4.3) (Rhodobacter sphaeroides).